The chain runs to 1076 residues: Protein EXPORTIN 1B (1076 aa).

Positions 37 to 103 constitute an Importin N-terminal domain; it reads ADNILRDLKA…KNYISDVIVQ (67 aa). HEAT repeat units lie at residues 135–171, 232–267, 282–319, 475–514, 564–601, 613–650, 683–720, 757–794, 799–836, 895–935, and 943–988; these read AKWKSFIPDLVIAAKTSETICENCMAILKLLSEEVFD, IFESPLLEILLKFFPVPAYRNLTLQCLSEVASLNFG, MNQLQAILPLNLNIPEAYSTGSSEEQAFIQNLALFFTS, DTEKQMLSKLSKQLSGEEWAWNNLNTLCWAIGSISGSMVV, KFLKTVVHKLFEFMHETHPGVQDMACDTFLKIVQKCKR, PFVSELLSGLATIVGDLQPHQIHTFYESVGSMIQAESD, LKEPDVIRTVLNILQTNTRVATSLGTFFLSQISLIFLD, REILKLIETFLDKAENQPHIGKQFVPPMMDQVLGDYAR, ARESEVLSLFATIINKYKVVMRDEVPLIFEAVFQCTLE, ETGL…VLTD, and KLHV…YTTK.

It belongs to the exportin family. As to expression, present in mature pollen grains, unpollinated pistils, and 2-week-old seedlings.

Its subcellular location is the nucleus. The protein localises to the nuclear pore complex. It is found in the nucleus membrane. Functionally, receptor for the leucine-rich nuclear export signal (NES). Binds cooperatively to the NES on its target protein and to the small GTPase Ran in its active GTP-bound form. Required for the maternal-to-embryonic transition and during gametophyte development. The protein is Protein EXPORTIN 1B of Arabidopsis thaliana (Mouse-ear cress).